A 259-amino-acid chain; its full sequence is Dihydroorotate dehydrogenase B (NAD(+)), electron transfer subunit (259 aa).

An FAD-binding FR-type domain is found at 1 to 101; that stretch reads MKIEDCTVEE…MGPLGRGYDV (101 aa). Residues 52 to 55, 69 to 71, and 76 to 77 each bind FAD; these read RPIS, IYR, and GT. [2Fe-2S] cluster is bound by residues Cys-223, Cys-228, Cys-231, and Cys-245.

It belongs to the PyrK family. Heterotetramer of 2 PyrK and 2 PyrD type B subunits. The cofactor is [2Fe-2S] cluster. Requires FAD as cofactor.

It participates in pyrimidine metabolism; UMP biosynthesis via de novo pathway; orotate from (S)-dihydroorotate (NAD(+) route): step 1/1. In terms of biological role, responsible for channeling the electrons from the oxidation of dihydroorotate from the FMN redox center in the PyrD type B subunit to the ultimate electron acceptor NAD(+). This Fusobacterium nucleatum subsp. nucleatum (strain ATCC 25586 / DSM 15643 / BCRC 10681 / CIP 101130 / JCM 8532 / KCTC 2640 / LMG 13131 / VPI 4355) protein is Dihydroorotate dehydrogenase B (NAD(+)), electron transfer subunit.